We begin with the raw amino-acid sequence, 214 residues long: Coiled-coil domain-containing protein 169 (214 aa).

The stretch at 56–138 (SEWKTRYETQ…YAFRLEQESK (83 aa)) forms a coiled coil. The disordered stretch occupies residues 154–214 (MTQVSGSNQV…RSNHLPKLNP (61 aa)). Polar residues-rich tracts occupy residues 155–166 (TQVSGSNQVSKR) and 185–195 (HNSMNQKTTNA).

The protein belongs to the CCDC169 family.

The sequence is that of Coiled-coil domain-containing protein 169 (Ccdc169) from Mus musculus (Mouse).